We begin with the raw amino-acid sequence, 418 residues long: Diacylglycerol O-acyltransferase 1 (418 aa).

The interval 1–30 (MSGTFNDIRRRKKEEGSPTAGITERHENKS) is disordered. Topologically, residues 1–71 (MSGTFNDIRR…LAVAWHTSSF (71 aa)) are cytoplasmic. The residue at position 17 (S17) is a Phosphoserine. A helical transmembrane segment spans residues 72 to 92 (VLFSIFTLFAISTPALWVLAI). The Lumenal portion of the chain corresponds to 93–186 (PYMIYFFFDR…DYRNQECTGP (94 aa)). N-linked (GlcNAc...) asparagine glycosylation occurs at N173. The helical transmembrane segment at 187–207 (TYLFGYHPHGIGALGAFGAFA) threads the bilayer. The Cytoplasmic segment spans residues 208-215 (TEGCNYSK). The chain crosses the membrane as a helical span at residues 216-236 (IFPGIPISLMTLVTQFHIPLY). Over 237–289 (RDYLLALGISSVSRKNALRTLSKNQSICIVVGGARESLLSSTNGTQLILNKRK) the chain is Lumenal. 2 N-linked (GlcNAc...) asparagine glycosylation sites follow: N260 and N279. The helical transmembrane segment at 290-310 (GFIKLAIQTGNINLVPVFAFG) threads the bilayer. At 311–418 (EVDCYNVLST…VPDAELKIVG (108 aa)) the chain is on the cytoplasmic side.

This sequence belongs to the diacylglycerol acyltransferase family.

Its subcellular location is the lipid droplet. It is found in the endoplasmic reticulum membrane. The enzyme catalyses an acyl-CoA + a 1,2-diacyl-sn-glycerol = a triacyl-sn-glycerol + CoA. It catalyses the reaction a 2-acylglycerol + an acyl-CoA = a 1,2-diacylglycerol + CoA. The catalysed reaction is 2-(9Z-octadecenoyl)-glycerol + (9Z)-octadecenoyl-CoA = 1,2-di-(9Z-octadecenoyl)-glycerol + CoA. The protein operates within glycerolipid metabolism; triacylglycerol biosynthesis. Its function is as follows. Catalyzes the terminal and only committed step in triacylglycerol (TAG) synthesis by using diacylglycerol (DAG) and fatty acyl-CoA as substrates. Required for storage lipid synthesis. Major DAG esterifying enzyme in stationary phase when TAG production is particularly active. Involved in lipid particle synthesis from the endoplasmic reticulum, promoting localized TAG production at discrete ER subdomains, and in ergosterol biosynthesis. Also has monoacylglycerol acyltransferase (MGAT) activity, catalyzing the acyl-CoA-dependent esterification of monoacylglycerol to diacylglycerol. Can also utilize ceramide instead of DAG, acylating the ceramides by attaching a fatty acid to the hydroxy group on the first carbon atom of the long-chain base to produce 1-O-acylceramides. The sequence is that of Diacylglycerol O-acyltransferase 1 (DGA1) from Saccharomyces cerevisiae (strain ATCC 204508 / S288c) (Baker's yeast).